Consider the following 686-residue polypeptide: Kinesin light chain (686 aa).

Disordered stretches follow at residues Met1–Gln23 and Lys158–Ala204. A coiled-coil region spans residues Ser20–Asp160. 6 TPR repeats span residues Leu215 to Thr248, Ala257 to Thr290, Ala299 to Val332, Ala341 to Lys374, Ala383 to Arg416, and Thr472 to Ala505. 2 disordered regions span residues Gln520–Thr558 and Gly586–Phe686. Polar residues predominate over residues Asp675–Phe686.

The protein belongs to the kinesin light chain family. In terms of assembly, oligomeric complex composed of two heavy chains and two light chains. Phosphorylation may modulate the process of mechanochemical coupling.

The protein localises to the cytoplasm. It is found in the cytoskeleton. Functionally, kinesin is a microtubule-associated force-producing protein that may play a role in organelle transport. The light chain may function in coupling of cargo to the heavy chain or in the modulation of its ATPase activity. The chain is Kinesin light chain from Strongylocentrotus purpuratus (Purple sea urchin).